The chain runs to 410 residues: Argininosuccinate synthase (410 aa).

ATP is bound by residues 10-18 (AYSGGLDTS) and alanine 37. The L-citrulline site is built by tyrosine 90 and serine 95. Residue glycine 120 participates in ATP binding. 3 residues coordinate L-aspartate: threonine 122, asparagine 126, and aspartate 127. Residue asparagine 126 participates in L-citrulline binding. Arginine 130, serine 182, serine 191, glutamate 267, and tyrosine 279 together coordinate L-citrulline.

Belongs to the argininosuccinate synthase family. Type 1 subfamily. As to quaternary structure, homotetramer.

The protein resides in the cytoplasm. The enzyme catalyses L-citrulline + L-aspartate + ATP = 2-(N(omega)-L-arginino)succinate + AMP + diphosphate + H(+). Its pathway is amino-acid biosynthesis; L-arginine biosynthesis; L-arginine from L-ornithine and carbamoyl phosphate: step 2/3. In Polynucleobacter asymbioticus (strain DSM 18221 / CIP 109841 / QLW-P1DMWA-1) (Polynucleobacter necessarius subsp. asymbioticus), this protein is Argininosuccinate synthase.